The sequence spans 59 residues: Large ribosomal subunit protein uL30 (59 aa).

This sequence belongs to the universal ribosomal protein uL30 family. As to quaternary structure, part of the 50S ribosomal subunit.

The polypeptide is Large ribosomal subunit protein uL30 (Escherichia coli (strain UTI89 / UPEC)).